Reading from the N-terminus, the 382-residue chain is Anhydro-N-acetylmuramic acid kinase (382 aa).

Residue 22–29 coordinates ATP; it reads GTSMDGVD.

This sequence belongs to the anhydro-N-acetylmuramic acid kinase family.

The catalysed reaction is 1,6-anhydro-N-acetyl-beta-muramate + ATP + H2O = N-acetyl-D-muramate 6-phosphate + ADP + H(+). It participates in amino-sugar metabolism; 1,6-anhydro-N-acetylmuramate degradation. The protein operates within cell wall biogenesis; peptidoglycan recycling. Functionally, catalyzes the specific phosphorylation of 1,6-anhydro-N-acetylmuramic acid (anhMurNAc) with the simultaneous cleavage of the 1,6-anhydro ring, generating MurNAc-6-P. Is required for the utilization of anhMurNAc either imported from the medium or derived from its own cell wall murein, and thus plays a role in cell wall recycling. The chain is Anhydro-N-acetylmuramic acid kinase from Burkholderia orbicola (strain AU 1054).